Consider the following 403-residue polypeptide: S-adenosylmethionine synthase (403 aa).

An ATP-binding site is contributed by histidine 16. Aspartate 18 is a binding site for Mg(2+). A K(+)-binding site is contributed by glutamate 44. L-methionine is bound by residues glutamate 57 and glutamine 100. The tract at residues 100–110 is flexible loop; sequence QSPDIAQGVDR. The segment at 106–126 is disordered; it reads QGVDRSYESRSGSASTDAHDL. ATP contacts are provided by residues 176-178, 248-249, aspartate 257, 263-264, alanine 280, and lysine 284; these read DGK, KF, and RK. An L-methionine-binding site is contributed by aspartate 257. An L-methionine-binding site is contributed by lysine 288.

This sequence belongs to the AdoMet synthase family. Homotetramer; dimer of dimers. Mg(2+) serves as cofactor. K(+) is required as a cofactor.

Its subcellular location is the cytoplasm. The enzyme catalyses L-methionine + ATP + H2O = S-adenosyl-L-methionine + phosphate + diphosphate. It participates in amino-acid biosynthesis; S-adenosyl-L-methionine biosynthesis; S-adenosyl-L-methionine from L-methionine: step 1/1. In terms of biological role, catalyzes the formation of S-adenosylmethionine (AdoMet) from methionine and ATP. The overall synthetic reaction is composed of two sequential steps, AdoMet formation and the subsequent tripolyphosphate hydrolysis which occurs prior to release of AdoMet from the enzyme. This is S-adenosylmethionine synthase from Clavibacter sepedonicus (Clavibacter michiganensis subsp. sepedonicus).